A 294-amino-acid polypeptide reads, in one-letter code: tRNA dimethylallyltransferase (294 aa).

An ATP-binding site is contributed by glycine 10 to threonine 17. Substrate is bound at residue threonine 12–threonine 17. The interaction with substrate tRNA stretch occupies residues aspartate 35–glutamine 38.

Belongs to the IPP transferase family. In terms of assembly, monomer. It depends on Mg(2+) as a cofactor.

The catalysed reaction is adenosine(37) in tRNA + dimethylallyl diphosphate = N(6)-dimethylallyladenosine(37) in tRNA + diphosphate. Its function is as follows. Catalyzes the transfer of a dimethylallyl group onto the adenine at position 37 in tRNAs that read codons beginning with uridine, leading to the formation of N6-(dimethylallyl)adenosine (i(6)A). This is tRNA dimethylallyltransferase from Streptococcus mutans serotype c (strain ATCC 700610 / UA159).